A 265-amino-acid polypeptide reads, in one-letter code: Early E4 31 kDa protein (265 aa).

This sequence belongs to the adenoviridae E4 30 to 34 kDa protein family. As to quaternary structure, interacts with E1B-55k.

Its subcellular location is the host nucleus. The protein resides in the host cytoplasm. Plays a major role to prevent cellular inhibition of viral genome replication by nuclear bodies. Assembles an SCF-like E3 ubiquitin ligase complex based on the cellular proteins ELOB, ELOC, CUL5 and RBX1, in cooperation with viral E1B-55K. This viral RING-type ligase ubiquitinates cellular substrates prior to proteasomal degradation: p53/TP53, LIG4, MRE11-RAD50-NBS1 (MRN) complex, ITGA3, DAXX and BLM. This chain is Early E4 31 kDa protein, found in Canis lupus familiaris (Dog).